The chain runs to 367 residues: Phospho-N-acetylmuramoyl-pentapeptide-transferase (367 aa).

A run of 10 helical transmembrane segments spans residues 16-36 (LLLA…WVRF), 62-82 (TMGG…FNLV), 87-107 (MLLP…DDWL), 125-145 (FWIM…PQPY), 158-178 (VGEV…IVFI), 190-210 (SLAG…TFLA), 214-234 (LTNL…FLWY), 240-260 (QVFM…VVAL), 264-284 (QWLL…STMI), and 326-346 (FVLI…IFGP).

It belongs to the glycosyltransferase 4 family. MraY subfamily. Mg(2+) serves as cofactor.

It is found in the cell membrane. It catalyses the reaction UDP-N-acetyl-alpha-D-muramoyl-L-alanyl-gamma-D-glutamyl-meso-2,6-diaminopimeloyl-D-alanyl-D-alanine + di-trans,octa-cis-undecaprenyl phosphate = di-trans,octa-cis-undecaprenyl diphospho-N-acetyl-alpha-D-muramoyl-L-alanyl-D-glutamyl-meso-2,6-diaminopimeloyl-D-alanyl-D-alanine + UMP. Its pathway is cell wall biogenesis; peptidoglycan biosynthesis. In terms of biological role, catalyzes the initial step of the lipid cycle reactions in the biosynthesis of the cell wall peptidoglycan: transfers peptidoglycan precursor phospho-MurNAc-pentapeptide from UDP-MurNAc-pentapeptide onto the lipid carrier undecaprenyl phosphate, yielding undecaprenyl-pyrophosphoryl-MurNAc-pentapeptide, known as lipid I. In Chloroflexus aurantiacus (strain ATCC 29366 / DSM 635 / J-10-fl), this protein is Phospho-N-acetylmuramoyl-pentapeptide-transferase.